Here is a 71-residue protein sequence, read N- to C-terminus: Conotoxin AbVIG (71 aa).

Residues valine 1–alanine 17 form the signal peptide. Residues glutamate 18–threonine 40 constitute a propeptide that is removed on maturation. 3 cysteine pairs are disulfide-bonded: cysteine 43–cysteine 57, cysteine 50–cysteine 61, and cysteine 56–cysteine 68.

Belongs to the conotoxin O1 superfamily. Expressed by the venom duct.

The protein localises to the secreted. In Conus abbreviatus (Abbreviated cone), this protein is Conotoxin AbVIG.